A 462-amino-acid polypeptide reads, in one-letter code: MASSRTGAGAGGRVVVFPFPFQGHFNPVMRLARALHARGLAITVFHSGALDPADYPADYRFVPVTVEADPKLLASEDIAAIVTTLNASCDAPFRARLSALLAAEGRDSVRCVFTDVSWNAVLTASSDLGVPALGMMTASAASLRDYMAYRTLIDKGYLPVKEERKEDPVPELPPYLVKDLLRVDTSDLEEFAELLARTVTAARRASGLIFNTFPLIETDTLAEIHKALSVPVFAVAPLNKLVPTATASLHGVVQADRGCLQWLDTQQPGSVLYVSFGSMAAMDPHEFVELAWGLADSKRPFVWVVRPNLIRGFESGALPDGVEDEVRGRGIVVAWAPQEEVLAHPAVGGFLTHNGWNSTVEAISEGVPMVCCPRHGDQFGNMRYVCDVWKVGTELVGEQLERGQVKAAIDRLFGTKEGEEIKERMKEFKIAAAKGIGIGVDVDETASPRTDLTDLVDLIKSF.

His-24 serves as the catalytic Proton acceptor. His-24 contacts an anthocyanidin. The active-site Charge relay is Asp-115. Positions 137, 336, 338, 353, 356, 357, 358, and 361 each coordinate UDP-alpha-D-glucose. Gly-376 contributes to the an anthocyanidin binding site. Residues Asp-377 and Gln-378 each contribute to the UDP-alpha-D-glucose site.

Belongs to the UDP-glycosyltransferase family. Requires Mg(2+) as cofactor. The cofactor is Ca(2+). Expressed at the same levels in roots and shoots.

It catalyses the reaction DIMBOA + UDP-alpha-D-glucose = DIMBOA beta-D-glucoside + UDP + H(+). It carries out the reaction DIBOA + UDP-alpha-D-glucose = DIBOA beta-D-glucoside + UDP + H(+). Functionally, glucosyltransferase involved in the last step of benzoxazinoid glucoside biosynthesis. Catalyzes the glucosylation of hydroxamic acids utilizing UDP-glucose as glucose doner, reducing the toxicity of these natural insecticides for storage. Can use DIMBOA and DIBOA as substrates, HMBOA (2-hydroxy-7-methoxy-2H-1,4-benzoxazin-3(4H)-one) and HBOA (2-hydroxy-2H-1,4-benzoxazin-3(4H)-one) with a lower efficiency, but not indole acetic acid or quercitin. This is DIMBOA UDP-glucosyltransferase BX9 (BX9) from Zea mays (Maize).